A 441-amino-acid polypeptide reads, in one-letter code: Sec-independent protein translocase protein TatCo (441 aa).

A disordered region spans residues methionine 1–glutamine 185. The segment covering alanine 13 to aspartate 22 has biased composition (acidic residues). Basic and acidic residues predominate over residues threonine 51–aspartate 62. A compositionally biased stretch (acidic residues) spans aspartate 75–aspartate 104. The segment covering glutamate 105–histidine 117 has biased composition (basic and acidic residues). 2 stretches are compositionally biased toward acidic residues: residues threonine 122–alanine 138 and glutamate 164–valine 173. A run of 6 helical transmembrane segments spans residues leucine 200–isoleucine 220, valine 276–phenylalanine 296, leucine 317–alanine 337, phenylalanine 357–valine 377, arginine 395–glycine 415, and methionine 416–leucine 436.

Belongs to the TatC family. As to quaternary structure, forms a complex with TatA.

It is found in the cell membrane. Functionally, part of the twin-arginine translocation (Tat) system that transports large folded proteins containing a characteristic twin-arginine motif in their signal peptide across membranes. The chain is Sec-independent protein translocase protein TatCo from Haloferax volcanii (strain ATCC 29605 / DSM 3757 / JCM 8879 / NBRC 14742 / NCIMB 2012 / VKM B-1768 / DS2) (Halobacterium volcanii).